Reading from the N-terminus, the 114-residue chain is Propane 2-monooxygenase, effector component (114 aa).

This sequence belongs to the TmoD/XamoD family. In terms of assembly, the propane 2-monooxygenase multicomponent enzyme system is composed of an electron transfer component and a monooxygenase component interacting with the effector protein MimD. The electron transfer component is composed of a reductase (MimB), and the monooxygenase component is formed by a large subunit (MimA) and a small subunit (MimC).

Functionally, effector component of the propane 2-monooxygenase multicomponent enzyme system which is involved in the degradation of propane via the O2-dependent hydroxylation of propane. The sequence is that of Propane 2-monooxygenase, effector component from Mycolicibacterium smegmatis (strain ATCC 700084 / mc(2)155) (Mycobacterium smegmatis).